We begin with the raw amino-acid sequence, 483 residues long: MRAQPAASHFVDGRPLEDETGAPIPVIYPATGEEIARLHEATPAVIEAALASGARAQAAWAAMRPVERARILRRASDLIRARNEELSLLETLDTGKPLQETLVADWASGADALEFFAGLAPAVTGETVPLGQDFVYTIREPLGLCVGIGAWNYPSQIACWKAAPALALGNAMVFKPSEVTPLGALKLAEILIEAGLPPGLFNVVQGRGGVGAALVTDSRVAKVSLTGSVPTGRRVYAAAAEGVRHVTMELGGKSPLIVFDDADLESAIGAAMLGNFYSAGQICSNGTRVFVQKGIKEAFLARLAERADAIRMGDPLDPEVQMGPLVSQAQLEKVLAYIEKARAEGGRLVCGGEASVSPGCYVQPTVFADVTDAMTLACEEVFGPVMAVLDFETEEEAIARANATDFGLAAGVFTADLTRAHRVVAQLQAGTCWINAYNLTPVEAPFGGVKLSGVGRENGRAAVEHYTQVKSVYVGMGPVDAPY.

Residues Ile-27 and Asp-93 each coordinate K(+). 149–151 (GAW) is a binding site for NAD(+). The Charge relay system role is filled by Lys-161. 175-178 (KPSE) serves as a coordination point for NAD(+). Val-179 is a binding site for K(+). Residue 228-231 (SVPT) coordinates NAD(+). Val-243 provides a ligand contact to K(+). The active-site Proton acceptor is Glu-249. Residues Gly-251, Cys-283, and Glu-380 each coordinate NAD(+). Catalysis depends on Cys-283, which acts as the Nucleophile. Cys-283 carries the cysteine sulfenic acid (-SOH) modification. Residues Lys-450 and Gly-453 each coordinate K(+). Catalysis depends on Glu-457, which acts as the Charge relay system.

This sequence belongs to the aldehyde dehydrogenase family. In terms of assembly, dimer of dimers. K(+) is required as a cofactor.

It catalyses the reaction betaine aldehyde + NAD(+) + H2O = glycine betaine + NADH + 2 H(+). It functions in the pathway amine and polyamine biosynthesis; betaine biosynthesis via choline pathway; betaine from betaine aldehyde: step 1/1. Its function is as follows. Involved in the biosynthesis of the osmoprotectant glycine betaine. Catalyzes the irreversible oxidation of betaine aldehyde to the corresponding acid. This chain is Betaine aldehyde dehydrogenase, found in Cereibacter sphaeroides (strain KD131 / KCTC 12085) (Rhodobacter sphaeroides).